Consider the following 897-residue polypeptide: Major intrinsically disordered Notch2-binding receptor 1 (897 aa).

Topologically, residues 1–872 are cytoplasmic; sequence MDAMPEYSLF…AEFRRAKACK (872 aa). Disordered stretches follow at residues 405–433, 450–502, and 688–766; these read AKDK…SVAC, SINC…EDSE, and TRRS…PPKD. Polar residues-rich tracts occupy residues 411 to 423 and 452 to 471; these read ASPS…SNGS and NCPS…GTQT. A compositionally biased stretch (basic and acidic residues) spans 472–498; sequence EQHESRKVKDYPSQNKFKERPPFKHSE. The span at 697–724 shows a compositional bias: polar residues; sequence EENSATESKVASITNSPRDWRTVSYSSH. The segment covering 725 to 756 has biased composition (basic and acidic residues); sequence NGEEGKERDRHSEGKERHRKSREAERQYEAHQ. A helical transmembrane segment spans residues 873 to 893; the sequence is IGALIFAAACTVILVIVVPIC. At 894 to 897 the chain is on the extracellular side; sequence TMKS.

It belongs to the MINAR family.

It localises to the cell membrane. Functionally, intrinsically disordered protein which may negatively regulate mTOR signaling pathway by stabilizing the mTOR complex component DEPTOR. Negatively regulates angiogenesis. Negatively regulates cell growth. May play a role in neuronal development. The protein is Major intrinsically disordered Notch2-binding receptor 1 (minar1) of Danio rerio (Zebrafish).